The chain runs to 758 residues: Probable serine/threonine-protein kinase HAL5-like (758 aa).

Disordered regions lie at residues 1-170 (MGTV…SADD) and 189-252 (IDNA…HRGR). Residues 22–57 (RSISGSIKSLFKPSSVQNSTPTVSPHESSPPLGNSD) show a composition bias toward polar residues. Residues 58-69 (NLKKLVDTKRAE) are compositionally biased toward basic and acidic residues. Over residues 129-153 (SSPRQSSSTNDRSSITSATSSVTSA) the composition is skewed to low complexity. The segment covering 216–226 (DKNFESSEYEI) has biased composition (basic and acidic residues). Positions 227 to 247 (RSNSLSRIHSTPQNESPTVNN) are enriched in polar residues. In terms of domain architecture, Protein kinase spans 442–744 (KSMGVVLGHG…IDQLLQSPWM (303 aa)). Residues 448 to 456 (LGHGAYGVV) and lysine 485 each bind ATP. The active-site Proton acceptor is aspartate 595.

This sequence belongs to the protein kinase superfamily. CAMK Ser/Thr protein kinase family. NPR/HAL subfamily. HAL5 sub-subfamily.

The catalysed reaction is L-seryl-[protein] + ATP = O-phospho-L-seryl-[protein] + ADP + H(+). The enzyme catalyses L-threonyl-[protein] + ATP = O-phospho-L-threonyl-[protein] + ADP + H(+). The polypeptide is Probable serine/threonine-protein kinase HAL5-like (Vanderwaltozyma polyspora (strain ATCC 22028 / DSM 70294 / BCRC 21397 / CBS 2163 / NBRC 10782 / NRRL Y-8283 / UCD 57-17) (Kluyveromyces polysporus)).